The primary structure comprises 321 residues: Gap junction delta-2 protein (321 aa).

The Cytoplasmic segment spans residues 1 to 19 (MGEWTILERLLEAAVQQHS). A helical transmembrane segment spans residues 20 to 42 (TMIGRILLTVVVIFRILIVAIVG). Topologically, residues 43 to 75 (ETVYDDEQTMFVCNTLQPGCNQACYDRAFPISH) are extracellular. The helical transmembrane segment at 76–98 (IRYWVFQIIMVCTPSLCFITYSV) threads the bilayer. At 99-197 (HQSAKQRERR…KLRRQEGISR (99 aa)) the chain is on the cytoplasmic side. Residues 120 to 141 (PAESIGGPGGTGGGGSGGSKRE) form a disordered region. Positions 125 to 137 (GGPGGTGGGGSGG) are enriched in gly residues. A helical membrane pass occupies residues 198-220 (FYIIQVVFRNALEIGFLVGQYFL). The Extracellular segment spans residues 221–252 (YGFSVPGLYECNRYPCIKEVECYVSRPTEKTV). A helical membrane pass occupies residues 253–275 (FLVFMFAVSGICVVLNLAELNHL). At 276 to 321 (GWRKIKLAVRGAQAKRKSVYEIRNKDLPRVSVPNFGRTQSSDSAYV) the chain is on the cytoplasmic side.

It belongs to the connexin family. Delta-type subfamily. In terms of assembly, a connexon is composed of a hexamer of connexins. In terms of tissue distribution, highly expressed in neurons.

It is found in the cell membrane. Its subcellular location is the cell junction. The protein resides in the gap junction. One gap junction consists of a cluster of closely packed pairs of transmembrane channels, the connexons, through which materials of low MW diffuse from one cell to a neighboring cell. This chain is Gap junction delta-2 protein (Gjd2), found in Mus musculus (Mouse).